A 240-amino-acid polypeptide reads, in one-letter code: EF-hand domain-containing protein D1 (240 aa).

Residues 17–54 form a disordered region; it reads EVRAETDQGDPQPAPCDAPAGHPEPEPPARAPTASADS. EF-hand domains lie at 91–126 and 127–162; these read RLLK…LGAP and QTHL…AAAG. Ca(2+) contacts are provided by Asp-104, Asp-108, Glu-115, Asp-140, Asp-142, Asp-144, Lys-146, and Glu-151.

As to expression, widely expressed. Highest expression in testis, followed by ovary, kidney, cerebrum, cerebellum, heart, liver, and spleen. In the cerebrum and cerebellum, undetectable at embryonic stages, expression increases after birth up to adult stage. In adult CNS, detected in neurons of the cerebellum, cerebrum and hippocampus formation, including dentate gyrus and Cornu Ammonis, but not in the white matter. In the testis, expressed in spermatocytes, but not in spermatogonia nor in interstitial cells. In ovary, found predominantly in mural granulosa cells and those of the cumulus oophorus. In kidney, expressed in collecting ducts, but not in glomeruli. Not detected in skeletal muscle.

It is found in the mitochondrion inner membrane. Acts as a calcium sensor for mitochondrial flash (mitoflash) activation, an event characterized by stochastic bursts of superoxide production. May play a role in neuronal differentiation. This chain is EF-hand domain-containing protein D1 (Efhd1), found in Mus musculus (Mouse).